The following is a 143-amino-acid chain: Pre-mRNA-splicing factor U5-Cwc21 (143 aa).

Residues Glu-27–Asn-70 form the CWF21 domain.

Belongs to the CWC21 family. Associates with the NTC complex (or PRP19-associated complex). The NTC complex associates with the spliceosome after the release of the U1 and U4 snRNAs and forms the CWC spliceosome subcomplex reminiscent of a late-stage spliceosome. Associates specifically with U5-containing snRNPs.

It localises to the cytoplasm. The protein resides in the nucleus. In terms of biological role, essential protein involved in pre-mRNA cis- and trans-splicing. May function at or prior to the first catalytic step of splicing at the catalytic center of the spliceosome. May do so by stabilizing the catalytic center or the position of the RNA substrate. This is Pre-mRNA-splicing factor U5-Cwc21 from Trypanosoma brucei brucei (strain 927/4 GUTat10.1).